A 96-amino-acid polypeptide reads, in one-letter code: Large ribosomal subunit protein uL23 (96 aa).

Belongs to the universal ribosomal protein uL23 family. As to quaternary structure, part of the 50S ribosomal subunit. Contacts protein L29, and trigger factor when it is bound to the ribosome.

Functionally, one of the early assembly proteins it binds 23S rRNA. One of the proteins that surrounds the polypeptide exit tunnel on the outside of the ribosome. Forms the main docking site for trigger factor binding to the ribosome. The polypeptide is Large ribosomal subunit protein uL23 (Halalkalibacterium halodurans (strain ATCC BAA-125 / DSM 18197 / FERM 7344 / JCM 9153 / C-125) (Bacillus halodurans)).